A 2871-amino-acid polypeptide reads, in one-letter code: Desmoplakin (2871 aa).

The interval 1 to 584 (MSCNGGSHPR…DYMKTIADLE (584 aa)) is interaction with PKP1, JUP, PKP2. A globular 1 region spans residues 1–1056 (MSCNGGSHPR…ANSENCNKNK (1056 aa)). Phosphoserine occurs at positions 22 and 53. Phosphotyrosine is present on tyrosine 56. At threonine 61 the chain carries Phosphothreonine. 3 positions are modified to phosphoserine: serine 165, serine 166, and serine 176. Spectrin repeat units follow at residues 178 to 271 (SGWD…HLRQ) and 272 to 375 (LQNI…LKEN). The Spectrin 3a repeat unit spans residues 376–446 (AAYFQFFEEA…NLVNKSKKIV (71 aa)). Positions 458-515 (NKPIILRALCDYKQDQKIVHKGDECILKDNNERSKWYVTGPGGVDMLVPSVGLIIPPP) constitute an SH3 domain. Residues 516–545 (NPLAVDLSCKIEQYYEAILALWNQLYINMK) form a Spectrin 3b repeat. Spectrin repeat units lie at residues 546–627 (SLVS…IQLP), 654–769 (VIET…SLCT), and 770–883 (VRAL…DLEK). The stretch at 1018-1945 (SEMLKSLEDL…QREIDKLRQR (928 aa)) forms a coiled coil. The tract at residues 1057–1945 (FLDQNLQKYQ…QREIDKLRQR (889 aa)) is central fibrous rod domain. Phosphoserine occurs at positions 1658, 1708, and 2024. The segment at 1946-2871 (PYGSHRETQT…YSFSSSSIGH (926 aa)) is globular 2. The tract at residues 1960–2208 (TVDTSKLVFD…LLLSVQKRSM (249 aa)) is 4.5 X 38 AA tandem repeats (Domain A). Plectin repeat units lie at residues 2009–2045 (QPFL…PEST), 2046–2083 (VMLL…FDDR), 2084–2121 (QQIY…RETG), 2122–2159 (MRLL…RDLY), 2163–2197 (NDPR…PHTG), 2198–2233 (LLLL…PSTV), 2251–2288 (KDFL…PGTA), 2289–2326 (LELL…IEFK), 2327–2364 (EKLL…KGHG), 2365–2402 (IRLL…EELS), 2406–2440 (SDPS…EETG), 2456–2493 (SQKN…YETF), 2507–2544 (TITG…RKFF), 2610–2647 (SDTL…SITG), 2648–2685 (QRLL…QDMA), 2724–2761 (QRFL…GRAA), and 2762–2799 (QRLQ…DITG). A phosphoserine mark is found at serine 2207, serine 2209, and serine 2225. The 4.5 X 38 AA tandem repeats (Domain B) stretch occupies residues 2244–2446 (DEVGERIKDF…EETGLCLLPL (203 aa)). Residues 2609–2822 (FSDTLEESSP…LPSPYNMSSA (214 aa)) form a 4.5 X 38 AA tandem repeats (Domain C) region. Phosphoserine is present on residues serine 2810 and serine 2815. Polar residues predominate over residues 2810-2823 (SKGLPSPYNMSSAP). The tract at residues 2810 to 2871 (SKGLPSPYNM…YSFSSSSIGH (62 aa)) is disordered. A Phosphotyrosine modification is found at tyrosine 2817. Phosphoserine occurs at positions 2820, 2821, and 2825. The interval 2824–2847 (GSRSGSRSGSRSGSRSGSRSGSRR) is 6 X 4 AA tandem repeats of G-S-R-[SR]. Residues 2824–2847 (GSRSGSRSGSRSGSRSGSRSGSRR) show a composition bias toward low complexity. Omega-N-methylarginine occurs at positions 2826 and 2847. Serine 2849 carries the phosphoserine modification. Threonine 2853 carries the phosphothreonine modification. Residues 2856-2871 (SSYSYSYSFSSSSIGH) are compositionally biased toward low complexity. Serine 2868 carries the post-translational modification Phosphoserine.

The protein belongs to the plakin or cytolinker family. Homodimer. Interacts with COL17A1 (via cytoplasmic region). Interacts with DSC2. Interacts with PKP2. Interacts with PKP1. Interacts weakly with TMEM65. Post-translationally, phosphorylation at Ser-2849 increases association with intermediate filament cytokeratin, potentially facilitating interaction between desmosome junctions and intermediate filament architecture. As to expression, expressed in oral mucosa (at protein level). Expressed in arrector pili muscle (at protein level). Expressed in the heart in the heart (at protein level). In terms of tissue distribution, apparently an obligate constituent of all desmosomes. Resides predominantly in tissues and cells of stratified origin.

It is found in the cell junction. The protein resides in the desmosome. Its subcellular location is the cell membrane. It localises to the cytoplasm. Its function is as follows. Major high molecular weight protein of desmosomes. Regulates profibrotic gene expression in cardiomyocytes via activation of the MAPK14/p38 MAPK signaling cascade and increase in TGFB1 protein abundance. In Homo sapiens (Human), this protein is Desmoplakin (DSP).